The sequence spans 198 residues: Dual specificity protein phosphatase 14 (198 aa).

One can recognise a Tyrosine-protein phosphatase domain in the interval G26–G167. Residue C111 is the Phosphocysteine intermediate of the active site.

This sequence belongs to the protein-tyrosine phosphatase family. Non-receptor class dual specificity subfamily. As to quaternary structure, interacts with CD28.

The catalysed reaction is O-phospho-L-tyrosyl-[protein] + H2O = L-tyrosyl-[protein] + phosphate. It carries out the reaction O-phospho-L-seryl-[protein] + H2O = L-seryl-[protein] + phosphate. It catalyses the reaction O-phospho-L-threonyl-[protein] + H2O = L-threonyl-[protein] + phosphate. Its function is as follows. Involved in the inactivation of MAP kinases. Dephosphorylates ERK, JNK and p38 MAP-kinases. Plays a negative role in TCR signaling by dephosphorylating MAP3K7 adapter TAB1 leading to its inactivation. In Bos taurus (Bovine), this protein is Dual specificity protein phosphatase 14 (DUSP14).